The sequence spans 310 residues: Tagatose-6-phosphate kinase (310 aa).

The protein belongs to the carbohydrate kinase PfkB family. LacC subfamily.

It catalyses the reaction D-tagatofuranose 6-phosphate + ATP = D-tagatofuranose 1,6-bisphosphate + ADP + H(+). The protein operates within carbohydrate metabolism; D-tagatose 6-phosphate degradation; D-glyceraldehyde 3-phosphate and glycerone phosphate from D-tagatose 6-phosphate: step 1/2. This Streptococcus uberis (strain ATCC BAA-854 / 0140J) protein is Tagatose-6-phosphate kinase.